Consider the following 235-residue polypeptide: Glucosamine-6-phosphate deaminase (235 aa).

Aspartate 62 (proton acceptor; for enolization step) is an active-site residue. Asparagine 128 (for ring-opening step) is an active-site residue. Catalysis depends on histidine 130, which acts as the Proton acceptor; for ring-opening step. Glutamate 135 functions as the For ring-opening step in the catalytic mechanism.

Belongs to the glucosamine/galactosamine-6-phosphate isomerase family. NagB subfamily.

It catalyses the reaction alpha-D-glucosamine 6-phosphate + H2O = beta-D-fructose 6-phosphate + NH4(+). It participates in amino-sugar metabolism; N-acetylneuraminate degradation; D-fructose 6-phosphate from N-acetylneuraminate: step 5/5. Catalyzes the reversible isomerization-deamination of glucosamine 6-phosphate (GlcN6P) to form fructose 6-phosphate (Fru6P) and ammonium ion. The protein is Glucosamine-6-phosphate deaminase of Latilactobacillus sakei subsp. sakei (strain 23K) (Lactobacillus sakei subsp. sakei).